The sequence spans 394 residues: NADH dehydrogenase [ubiquinone] iron-sulfur protein 2 (394 aa).

The protein belongs to the complex I 49 kDa subunit family. Complex I is composed of at least 49 different subunits. This is a component of the iron-sulfur (IP) fragment of the enzyme.

It localises to the mitochondrion. It catalyses the reaction a ubiquinone + NADH + 5 H(+)(in) = a ubiquinol + NAD(+) + 4 H(+)(out). Functionally, core subunit of the mitochondrial membrane respiratory chain NADH dehydrogenase (Complex I) that is believed to belong to the minimal assembly required for catalysis. Complex I functions in the transfer of electrons from NADH to the respiratory chain. The immediate electron acceptor for the enzyme is believed to be ubiquinone. Component of the iron-sulfur (IP) fragment of the enzyme. This Arabidopsis thaliana (Mouse-ear cress) protein is NADH dehydrogenase [ubiquinone] iron-sulfur protein 2 (NAD7).